The chain runs to 102 residues: Acylphosphatase 1 (102 aa).

The Acylphosphatase-like domain maps to 12-100; the sequence is TRLVRVRGRV…PRFDRFEQLP (89 aa). Residues Arg27 and Asn45 contribute to the active site.

Belongs to the acylphosphatase family.

It carries out the reaction an acyl phosphate + H2O = a carboxylate + phosphate + H(+). This chain is Acylphosphatase 1 (acyP1), found in Ralstonia nicotianae (strain ATCC BAA-1114 / GMI1000) (Ralstonia solanacearum).